The chain runs to 25 residues: Glucomannokinase (25 aa).

This sequence belongs to the ROK (NagC/XylR) family. In terms of assembly, homodimer.

It carries out the reaction D-glucose + ATP = D-glucose 6-phosphate + ADP + H(+). The enzyme catalyses D-mannose + ATP = D-mannose 6-phosphate + ADP + H(+). Its pathway is carbohydrate degradation; glycolysis; D-glyceraldehyde 3-phosphate and glycerone phosphate from D-glucose: step 1/4. It functions in the pathway carbohydrate metabolism; mannose metabolism. Competitively inhibited by 2-deoxy-glucose. Its function is as follows. The enzyme has great affinity for glucose and mannose. The sequence is that of Glucomannokinase from Segatella bryantii (Prevotella bryantii).